Reading from the N-terminus, the 210-residue chain is Ras-related protein Rab-2-B (210 aa).

13–21 is a GTP binding site; that stretch reads GDTGVGKSC. The Effector region signature appears at 35–43; the sequence is HDLTIGVEF. Residues 61–65, 119–122, and 149–151 contribute to the GTP site; these read DTAGQ, NKCD, and SAK. 2 S-geranylgeranyl cysteine lipidation sites follow: Cys-208 and Cys-209.

Belongs to the small GTPase superfamily. Rab family.

It is found in the endoplasmic reticulum membrane. The protein localises to the golgi apparatus membrane. Its function is as follows. Protein transport. Probably involved in vesicular traffic. The chain is Ras-related protein Rab-2-B (RAB2B) from Zea mays (Maize).